Here is a 422-residue protein sequence, read N- to C-terminus: 4-hydroxy-3-methylbut-2-en-1-yl diphosphate synthase (flavodoxin) (422 aa).

Residues Cys316, Cys319, Cys362, and Glu369 each contribute to the [4Fe-4S] cluster site.

Belongs to the IspG family. The cofactor is [4Fe-4S] cluster.

The enzyme catalyses (2E)-4-hydroxy-3-methylbut-2-enyl diphosphate + oxidized [flavodoxin] + H2O + 2 H(+) = 2-C-methyl-D-erythritol 2,4-cyclic diphosphate + reduced [flavodoxin]. Its pathway is isoprenoid biosynthesis; isopentenyl diphosphate biosynthesis via DXP pathway; isopentenyl diphosphate from 1-deoxy-D-xylulose 5-phosphate: step 5/6. Converts 2C-methyl-D-erythritol 2,4-cyclodiphosphate (ME-2,4cPP) into 1-hydroxy-2-methyl-2-(E)-butenyl 4-diphosphate. This is 4-hydroxy-3-methylbut-2-en-1-yl diphosphate synthase (flavodoxin) from Anaplasma marginale (strain St. Maries).